Consider the following 101-residue polypeptide: Small ribosomal subunit protein uS14 (101 aa).

It belongs to the universal ribosomal protein uS14 family. Part of the 30S ribosomal subunit. Contacts proteins S3 and S10.

In terms of biological role, binds 16S rRNA, required for the assembly of 30S particles and may also be responsible for determining the conformation of the 16S rRNA at the A site. The protein is Small ribosomal subunit protein uS14 of Tropheryma whipplei (strain TW08/27) (Whipple's bacillus).